Reading from the N-terminus, the 300-residue chain is GTP-binding protein At2g22870 (300 aa).

The 179-residue stretch at 119 to 297 (DRPEIAILGR…LLHMSQLRNY (179 aa)) folds into the EngB-type G domain. GTP contacts are provided by residues 127–134 (GRSNVGKS), 154–158 (GKTQL), 172–175 (DLPG), 239–242 (TKCD), and 276–278 (TSS). Residues Ser-134 and Thr-156 each contribute to the Mg(2+) site.

This sequence belongs to the TRAFAC class TrmE-Era-EngA-EngB-Septin-like GTPase superfamily. EngB GTPase family. The cofactor is Mg(2+).

In Arabidopsis thaliana (Mouse-ear cress), this protein is GTP-binding protein At2g22870 (EMB2001).